The chain runs to 346 residues: Tetraacyldisaccharide 4'-kinase (346 aa).

54 to 61 contributes to the ATP binding site; it reads TVGGAGKT.

This sequence belongs to the LpxK family.

The catalysed reaction is a lipid A disaccharide + ATP = a lipid IVA + ADP + H(+). It participates in glycolipid biosynthesis; lipid IV(A) biosynthesis; lipid IV(A) from (3R)-3-hydroxytetradecanoyl-[acyl-carrier-protein] and UDP-N-acetyl-alpha-D-glucosamine: step 6/6. Its function is as follows. Transfers the gamma-phosphate of ATP to the 4'-position of a tetraacyldisaccharide 1-phosphate intermediate (termed DS-1-P) to form tetraacyldisaccharide 1,4'-bis-phosphate (lipid IVA). This Rhizobium etli (strain ATCC 51251 / DSM 11541 / JCM 21823 / NBRC 15573 / CFN 42) protein is Tetraacyldisaccharide 4'-kinase.